The primary structure comprises 217 residues: Urease accessory protein UreF (217 aa).

It belongs to the UreF family. In terms of assembly, ureD, UreF and UreG form a complex that acts as a GTP-hydrolysis-dependent molecular chaperone, activating the urease apoprotein by helping to assemble the nickel containing metallocenter of UreC. The UreE protein probably delivers the nickel.

The protein resides in the cytoplasm. Required for maturation of urease via the functional incorporation of the urease nickel metallocenter. The protein is Urease accessory protein UreF of Ruegeria pomeroyi (strain ATCC 700808 / DSM 15171 / DSS-3) (Silicibacter pomeroyi).